The chain runs to 209 residues: Dehydration-responsive element-binding protein 1F (209 aa).

Residues 14-26 (KKRAGRRVFKETR) carry the Nuclear localization signal motif. Positions 29 to 86 (VYRGIRRRNGDKWVCEVREPTHQRRIWLGTYPTADMAARAHDVAVLALRGRSACLNFA) form a DNA-binding region, AP2/ERF. Residues 137–157 (FGSGSGSGSGSEERNSSSYGF) are disordered.

The protein belongs to the AP2/ERF transcription factor family. ERF subfamily.

The protein localises to the nucleus. In terms of biological role, transcriptional activator that binds specifically to the DNA sequence 5'-[AG]CCGAC-3'. Binding to the C-repeat/DRE element mediates cold or dehydration-inducible transcription. CBF/DREB1 factors play a key role in freezing tolerance and cold acclimation. This chain is Dehydration-responsive element-binding protein 1F (DREB1F), found in Arabidopsis thaliana (Mouse-ear cress).